Here is a 244-residue protein sequence, read N- to C-terminus: Pyridoxine 5'-phosphate synthase (244 aa).

Asn12 is a 3-amino-2-oxopropyl phosphate binding site. A 1-deoxy-D-xylulose 5-phosphate-binding site is contributed by 14-15 (DH). Arg23 lines the 3-amino-2-oxopropyl phosphate pocket. His48 serves as the catalytic Proton acceptor. Residues Arg50 and His55 each contribute to the 1-deoxy-D-xylulose 5-phosphate site. Glu75 acts as the Proton acceptor in catalysis. Thr105 lines the 1-deoxy-D-xylulose 5-phosphate pocket. Residue His196 is the Proton donor of the active site. 3-amino-2-oxopropyl phosphate is bound by residues Gly197 and 218–219 (GH).

Belongs to the PNP synthase family. In terms of assembly, homooctamer; tetramer of dimers.

Its subcellular location is the cytoplasm. The enzyme catalyses 3-amino-2-oxopropyl phosphate + 1-deoxy-D-xylulose 5-phosphate = pyridoxine 5'-phosphate + phosphate + 2 H2O + H(+). Its pathway is cofactor biosynthesis; pyridoxine 5'-phosphate biosynthesis; pyridoxine 5'-phosphate from D-erythrose 4-phosphate: step 5/5. Its function is as follows. Catalyzes the complicated ring closure reaction between the two acyclic compounds 1-deoxy-D-xylulose-5-phosphate (DXP) and 3-amino-2-oxopropyl phosphate (1-amino-acetone-3-phosphate or AAP) to form pyridoxine 5'-phosphate (PNP) and inorganic phosphate. The chain is Pyridoxine 5'-phosphate synthase from Alcanivorax borkumensis (strain ATCC 700651 / DSM 11573 / NCIMB 13689 / SK2).